The following is a 150-amino-acid chain: Large ribosomal subunit protein bL9 (150 aa).

It belongs to the bacterial ribosomal protein bL9 family.

Binds to the 23S rRNA. The chain is Large ribosomal subunit protein bL9 from Lactococcus lactis subsp. cremoris (strain MG1363).